Reading from the N-terminus, the 574-residue chain is Proline--tRNA ligase (574 aa).

Belongs to the class-II aminoacyl-tRNA synthetase family. ProS type 1 subfamily. Homodimer.

The protein resides in the cytoplasm. The enzyme catalyses tRNA(Pro) + L-proline + ATP = L-prolyl-tRNA(Pro) + AMP + diphosphate. Catalyzes the attachment of proline to tRNA(Pro) in a two-step reaction: proline is first activated by ATP to form Pro-AMP and then transferred to the acceptor end of tRNA(Pro). As ProRS can inadvertently accommodate and process non-cognate amino acids such as alanine and cysteine, to avoid such errors it has two additional distinct editing activities against alanine. One activity is designated as 'pretransfer' editing and involves the tRNA(Pro)-independent hydrolysis of activated Ala-AMP. The other activity is designated 'posttransfer' editing and involves deacylation of mischarged Ala-tRNA(Pro). The misacylated Cys-tRNA(Pro) is not edited by ProRS. The chain is Proline--tRNA ligase from Nitratidesulfovibrio vulgaris (strain ATCC 29579 / DSM 644 / CCUG 34227 / NCIMB 8303 / VKM B-1760 / Hildenborough) (Desulfovibrio vulgaris).